We begin with the raw amino-acid sequence, 183 residues long: ATP-dependent protease subunit HslV (183 aa).

The active site involves Thr-12. Na(+) contacts are provided by Ala-166, Cys-169, and Thr-172.

It belongs to the peptidase T1B family. HslV subfamily. In terms of assembly, a double ring-shaped homohexamer of HslV is capped on each side by a ring-shaped HslU homohexamer. The assembly of the HslU/HslV complex is dependent on binding of ATP.

It is found in the cytoplasm. The catalysed reaction is ATP-dependent cleavage of peptide bonds with broad specificity.. Its activity is regulated as follows. Allosterically activated by HslU binding. Its function is as follows. Protease subunit of a proteasome-like degradation complex believed to be a general protein degrading machinery. This chain is ATP-dependent protease subunit HslV, found in Afipia carboxidovorans (strain ATCC 49405 / DSM 1227 / KCTC 32145 / OM5) (Oligotropha carboxidovorans).